A 107-amino-acid chain; its full sequence is High mobility group protein HMG-I/HMG-Y (107 aa).

A disordered region spans residues 1–107 (MSESSSKSSQ…ISQESSEEEQ (107 aa)). An N-acetylserine modification is found at Ser2. At Lys7 the chain carries N6-acetyllysine. Ser8 bears the ADP-ribosylserine mark. An ADP-ribosylserine; alternate modification is found at Ser9. The residue at position 9 (Ser9) is a Phosphoserine; alternate. Residue Lys15 is modified to N6-acetyllysine; alternate. A Glycyl lysine isopeptide (Lys-Gly) (interchain with G-Cter in SUMO2); alternate cross-link involves residue Lys15. The span at 15–24 (KQEKDGTEKR) shows a compositional bias: basic and acidic residues. A DNA-binding region (a.T hook 1) is located at residues 21-31 (TEKRGRGRPRK). Arg26 carries the post-translational modification Asymmetric dimethylarginine; alternate. Residue Arg26 is modified to Omega-N-methylarginine; alternate. Arg26 carries the post-translational modification Symmetric dimethylarginine; alternate. Position 36 is a phosphoserine; by HIPK2 and CDC2 (Ser36). Position 39 is a phosphothreonine (Thr39). Phosphoserine is present on residues Ser44 and Ser49. Residue Thr53 is modified to Phosphothreonine; by HIPK2 and CDC2. DNA-binding regions (a.T hook) lie at residues 53-63 (TPKRPRGRPKG) and 78-89 (APGRKPRGRPKK). An interaction with HIPK2 region spans residues 53-77 (TPKRPRGRPKGSKNKGAAKTRKATT). Basic residues predominate over residues 55 to 74 (KRPRGRPKGSKNKGAAKTRK). Asymmetric dimethylarginine; by PRMT6; alternate is present on residues Arg58 and Arg60. An omega-N-methylarginine; by PRMT6; alternate mark is found at Arg58 and Arg60. Over residues 93–107 (EEEEGISQESSEEEQ) the composition is skewed to acidic residues. Residues Ser99, Ser102, and Ser103 each carry the phosphoserine modification.

The protein belongs to the HMGA family. In terms of assembly, interacts with HIPK2. In terms of processing, isoforms HMG-I and HMG-Y can be phosphorylated by HIPK2. Phosphorylation may modulate DNA-binding affinity. Methylation at Arg-58 is mutually exclusive with methylation at Arg-60.

Its subcellular location is the nucleus. The protein localises to the chromosome. Functionally, HMG-I/Y bind preferentially to the minor groove of A+T rich regions in double-stranded DNA. It is suggested that these proteins could function in nucleosome phasing and in the 3'-end processing of mRNA transcripts. They are also involved in the transcription regulation of genes containing, or in close proximity to A+T-rich regions. This Cricetulus griseus (Chinese hamster) protein is High mobility group protein HMG-I/HMG-Y (HMGA1).